Here is a 114-residue protein sequence, read N- to C-terminus: Immunoglobulin kappa variable 6D-21 (114 aa).

The signal sequence occupies residues 1–19 (MSPSQLIGFLLLWVPASRG). The tract at residues 20 to 42 (EIVLTQSPDFQSVTPKEKVTITC) is framework-1. Residues 20–114 (EIVLTQSPDF…YYCHQSSSLP (95 aa)) enclose the Ig-like domain. Cys-42 and Cys-107 are joined by a disulfide. A complementarity-determining-1 region spans residues 43-53 (RASQSIGSSLH). Positions 54-68 (WYQQKPDQSPKLLIK) are framework-2. The complementarity-determining-2 stretch occupies residues 69–75 (YASQSIS). Positions 76-107 (GVPSRFSGSGSGTDFTLTINSLEAEDAAAYYC) are framework-3. Positions 108 to 114 (HQSSSLP) are complementarity-determining-3.

Immunoglobulins are composed of two identical heavy chains and two identical light chains; disulfide-linked.

It localises to the secreted. It is found in the cell membrane. Its function is as follows. V region of the variable domain of immunoglobulin light chains that participates in the antigen recognition. Immunoglobulins, also known as antibodies, are membrane-bound or secreted glycoproteins produced by B lymphocytes. In the recognition phase of humoral immunity, the membrane-bound immunoglobulins serve as receptors which, upon binding of a specific antigen, trigger the clonal expansion and differentiation of B lymphocytes into immunoglobulins-secreting plasma cells. Secreted immunoglobulins mediate the effector phase of humoral immunity, which results in the elimination of bound antigens. The antigen binding site is formed by the variable domain of one heavy chain, together with that of its associated light chain. Thus, each immunoglobulin has two antigen binding sites with remarkable affinity for a particular antigen. The variable domains are assembled by a process called V-(D)-J rearrangement and can then be subjected to somatic hypermutations which, after exposure to antigen and selection, allow affinity maturation for a particular antigen. This is Immunoglobulin kappa variable 6D-21 from Homo sapiens (Human).